A 739-amino-acid polypeptide reads, in one-letter code: Phosphoribosylformylglycinamidine synthase subunit PurL (739 aa).

The active site involves His-53. ATP-binding residues include Tyr-56 and Lys-95. Residue Glu-97 coordinates Mg(2+). Residues 98-101 and Arg-120 each bind substrate; that span reads SHNH. His-99 functions as the Proton acceptor in the catalytic mechanism. Asp-121 lines the Mg(2+) pocket. Gln-244 is a binding site for substrate. Asp-274 lines the Mg(2+) pocket. Substrate is bound at residue 318-320; it reads ESQ. ATP contacts are provided by Asp-501 and Gly-538. Asn-539 is a binding site for Mg(2+). Ser-541 contacts substrate.

Belongs to the FGAMS family. In terms of assembly, monomer. Part of the FGAM synthase complex composed of 1 PurL, 1 PurQ and 2 PurS subunits.

The protein localises to the cytoplasm. It catalyses the reaction N(2)-formyl-N(1)-(5-phospho-beta-D-ribosyl)glycinamide + L-glutamine + ATP + H2O = 2-formamido-N(1)-(5-O-phospho-beta-D-ribosyl)acetamidine + L-glutamate + ADP + phosphate + H(+). Its pathway is purine metabolism; IMP biosynthesis via de novo pathway; 5-amino-1-(5-phospho-D-ribosyl)imidazole from N(2)-formyl-N(1)-(5-phospho-D-ribosyl)glycinamide: step 1/2. Functionally, part of the phosphoribosylformylglycinamidine synthase complex involved in the purines biosynthetic pathway. Catalyzes the ATP-dependent conversion of formylglycinamide ribonucleotide (FGAR) and glutamine to yield formylglycinamidine ribonucleotide (FGAM) and glutamate. The FGAM synthase complex is composed of three subunits. PurQ produces an ammonia molecule by converting glutamine to glutamate. PurL transfers the ammonia molecule to FGAR to form FGAM in an ATP-dependent manner. PurS interacts with PurQ and PurL and is thought to assist in the transfer of the ammonia molecule from PurQ to PurL. This chain is Phosphoribosylformylglycinamidine synthase subunit PurL, found in Listeria monocytogenes serovar 1/2a (strain ATCC BAA-679 / EGD-e).